We begin with the raw amino-acid sequence, 395 residues long: Sensor protein DltS (395 aa).

The next 2 helical transmembrane spans lie at 9–29 and 136–156; these read FVFLTMSILIVVVLFLFAVSN and FLILVFTIFGFCLLAAVSLYL. A Histidine kinase domain is found at 177–387; sequence DASHELKTPI…RLEVQLPIDG (211 aa). Residue histidine 180 is modified to Phosphohistidine; by autocatalysis.

The protein localises to the cell membrane. The catalysed reaction is ATP + protein L-histidine = ADP + protein N-phospho-L-histidine.. Functionally, member of the two-component regulatory system DltS/DltR. Regulates the expression of the dlt operon. Probably phosphorylates DltR. This Streptococcus agalactiae serotype V (strain ATCC BAA-611 / 2603 V/R) protein is Sensor protein DltS (dltS).